Here is a 367-residue protein sequence, read N- to C-terminus: Protein RecA (367 aa).

73-80 (GPESSGKT) contacts ATP.

It belongs to the RecA family.

The protein localises to the cytoplasm. Functionally, can catalyze the hydrolysis of ATP in the presence of single-stranded DNA, the ATP-dependent uptake of single-stranded DNA by duplex DNA, and the ATP-dependent hybridization of homologous single-stranded DNAs. It interacts with LexA causing its activation and leading to its autocatalytic cleavage. The sequence is that of Protein RecA from Delftia acidovorans (strain DSM 14801 / SPH-1).